Reading from the N-terminus, the 171-residue chain is Transcriptional repressor NrdR (171 aa).

Positions 1 to 10 are enriched in basic residues; the sequence is MQCPHCHHNG. The segment at 1-21 is disordered; it reads MQCPHCHHNGSRVVDSRPTDD. A zinc finger spans residues 3 to 34; sequence CPHCHHNGSRVVDSRPTDDGRVIRRRRECENC. Positions 49–139 constitute an ATP-cone domain; that stretch reads LLVIKKNGAR…VYRQFKDMHV (91 aa). The disordered stretch occupies residues 152 to 171; the sequence is KVKLAKPSAKTTHAPKRKKD.

It belongs to the NrdR family. Requires Zn(2+) as cofactor.

Negatively regulates transcription of bacterial ribonucleotide reductase nrd genes and operons by binding to NrdR-boxes. This Lactiplantibacillus plantarum (strain ATCC BAA-793 / NCIMB 8826 / WCFS1) (Lactobacillus plantarum) protein is Transcriptional repressor NrdR.